A 462-amino-acid polypeptide reads, in one-letter code: Sugar transporter ERD6-like 2 (462 aa).

12 helical membrane-spanning segments follow: residues 23–43 (SGLL…GCAM), 70–90 (VMTL…ALVG), 96–116 (WISD…HDII), 123–143 (LFLG…IAEI), 156–176 (NQLL…FFHW), 178–198 (TLAL…FFIP), 261–281 (LIIG…AISA), 296–316 (IGTT…MLTV), 324–344 (LLMI…LSYY), 357–377 (VMLI…LGGL), 397–417 (LVTM…NFMI), and 423–443 (GTYF…WTLV).

This sequence belongs to the major facilitator superfamily. Sugar transporter (TC 2.A.1.1) family.

It is found in the membrane. Functionally, sugar transporter. This Arabidopsis thaliana (Mouse-ear cress) protein is Sugar transporter ERD6-like 2 (SUGTL3).